The chain runs to 92 residues: Large ribosomal subunit protein bL25 (92 aa).

This sequence belongs to the bacterial ribosomal protein bL25 family. In terms of assembly, part of the 50S ribosomal subunit; part of the 5S rRNA/L5/L18/L25 subcomplex. Contacts the 5S rRNA. Binds to the 5S rRNA independently of L5 and L18.

This is one of the proteins that binds to the 5S RNA in the ribosome where it forms part of the central protuberance. This Aliivibrio fischeri (strain ATCC 700601 / ES114) (Vibrio fischeri) protein is Large ribosomal subunit protein bL25.